The chain runs to 435 residues: Glutamyl-tRNA reductase (435 aa).

Substrate is bound by residues 49 to 52 (TCNR), serine 109, 114 to 116 (EGQ), and glutamine 120. Cysteine 50 acts as the Nucleophile in catalysis. Residue 198-203 (GAGRMS) participates in NADP(+) binding.

This sequence belongs to the glutamyl-tRNA reductase family. In terms of assembly, homodimer.

The catalysed reaction is (S)-4-amino-5-oxopentanoate + tRNA(Glu) + NADP(+) = L-glutamyl-tRNA(Glu) + NADPH + H(+). The protein operates within porphyrin-containing compound metabolism; protoporphyrin-IX biosynthesis; 5-aminolevulinate from L-glutamyl-tRNA(Glu): step 1/2. Its pathway is porphyrin-containing compound metabolism; chlorophyll biosynthesis. Catalyzes the NADPH-dependent reduction of glutamyl-tRNA(Glu) to glutamate 1-semialdehyde (GSA). The chain is Glutamyl-tRNA reductase from Prochlorococcus marinus (strain MIT 9211).